Reading from the N-terminus, the 515-residue chain is Bifunctional purine biosynthesis protein PurH (515 aa).

The 145-residue stretch at 1–145 (MTKRALISVS…KNHASVTVVV (145 aa)) folds into the MGS-like domain.

This sequence belongs to the PurH family.

The catalysed reaction is (6R)-10-formyltetrahydrofolate + 5-amino-1-(5-phospho-beta-D-ribosyl)imidazole-4-carboxamide = 5-formamido-1-(5-phospho-D-ribosyl)imidazole-4-carboxamide + (6S)-5,6,7,8-tetrahydrofolate. It catalyses the reaction IMP + H2O = 5-formamido-1-(5-phospho-D-ribosyl)imidazole-4-carboxamide. It functions in the pathway purine metabolism; IMP biosynthesis via de novo pathway; 5-formamido-1-(5-phospho-D-ribosyl)imidazole-4-carboxamide from 5-amino-1-(5-phospho-D-ribosyl)imidazole-4-carboxamide (10-formyl THF route): step 1/1. Its pathway is purine metabolism; IMP biosynthesis via de novo pathway; IMP from 5-formamido-1-(5-phospho-D-ribosyl)imidazole-4-carboxamide: step 1/1. The polypeptide is Bifunctional purine biosynthesis protein PurH (Streptococcus uberis (strain ATCC BAA-854 / 0140J)).